The chain runs to 149 residues: uncharacterized protein (149 aa).

The stretch at 111–140 (HKALEKATELIENEEELLKREGIKRENLKF) forms a coiled coil.

This is an uncharacterized protein from Aquifex aeolicus (strain VF5).